Consider the following 536-residue polypeptide: Glutamyl-tRNA(Gln) amidotransferase subunit B, mitochondrial (536 aa).

The transit peptide at 1-8 (MLRVHRLY) directs the protein to the mitochondrion.

This sequence belongs to the GatB/GatE family. GatB subfamily. Subunit of the heterotrimeric GatFAB amidotransferase (AdT) complex, composed of A, B and F subunits.

Its subcellular location is the mitochondrion. It catalyses the reaction L-glutamyl-tRNA(Gln) + L-glutamine + ATP + H2O = L-glutaminyl-tRNA(Gln) + L-glutamate + ADP + phosphate + H(+). Functionally, allows the formation of correctly charged Gln-tRNA(Gln) through the transamidation of misacylated Glu-tRNA(Gln) in the mitochondria. The reaction takes place in the presence of glutamine and ATP through an activated gamma-phospho-Glu-tRNA(Gln). The chain is Glutamyl-tRNA(Gln) amidotransferase subunit B, mitochondrial from Eremothecium gossypii (strain ATCC 10895 / CBS 109.51 / FGSC 9923 / NRRL Y-1056) (Yeast).